A 306-amino-acid polypeptide reads, in one-letter code: Tryptophan 2,3-dioxygenase (306 aa).

The disordered stretch occupies residues 1 to 29 (MQPPGDDAAPRCPFAGAHAPDAPHVPEAA). Substrate contacts are provided by residues 75–79 (FIIQH), tyrosine 137, and arginine 141. Histidine 264 contacts heme. Threonine 278 provides a ligand contact to substrate.

This sequence belongs to the tryptophan 2,3-dioxygenase family. In terms of assembly, homotetramer. Heme serves as cofactor.

The catalysed reaction is L-tryptophan + O2 = N-formyl-L-kynurenine. It participates in amino-acid degradation; L-tryptophan degradation via kynurenine pathway; L-kynurenine from L-tryptophan: step 1/2. In terms of biological role, heme-dependent dioxygenase that catalyzes the oxidative cleavage of the L-tryptophan (L-Trp) pyrrole ring and converts L-tryptophan to N-formyl-L-kynurenine. Catalyzes the oxidative cleavage of the indole moiety. This Burkholderia mallei (strain NCTC 10247) protein is Tryptophan 2,3-dioxygenase.